Consider the following 50-residue polypeptide: METTNFGFIASLLFVGVPTIFLIGLFISTQDGEKSSFFSDSSKGKLGPKR.

The helical transmembrane segment at 7-27 threads the bilayer; the sequence is GFIASLLFVGVPTIFLIGLFI.

The protein belongs to the PsbM family. In terms of assembly, PSII is composed of 1 copy each of membrane proteins PsbA, PsbB, PsbC, PsbD, PsbE, PsbF, PsbH, PsbI, PsbJ, PsbK, PsbL, PsbM, PsbT, PsbX, PsbY, Psb30/Ycf12, peripheral proteins PsbO, CyanoQ (PsbQ), PsbU, PsbV and a large number of cofactors. It forms dimeric complexes.

The protein localises to the cellular thylakoid membrane. Its function is as follows. One of the components of the core complex of photosystem II (PSII). PSII is a light-driven water:plastoquinone oxidoreductase that uses light energy to abstract electrons from H(2)O, generating O(2) and a proton gradient subsequently used for ATP formation. It consists of a core antenna complex that captures photons, and an electron transfer chain that converts photonic excitation into a charge separation. This subunit is found at the monomer-monomer interface. This Prochlorococcus marinus (strain MIT 9312) protein is Photosystem II reaction center protein M.